Consider the following 159-residue polypeptide: 2-C-methyl-D-erythritol 2,4-cyclodiphosphate synthase (159 aa).

Residues Asp-8 and His-10 each coordinate a divalent metal cation. 4-CDP-2-C-methyl-D-erythritol 2-phosphate contacts are provided by residues Asp-8 to His-10 and His-34 to Ser-35. His-42 lines the a divalent metal cation pocket. Residues Asp-56 to Gly-58, Phe-61 to Asp-65, Ala-100 to Leu-106, Thr-132 to Glu-135, Phe-139, and Arg-142 each bind 4-CDP-2-C-methyl-D-erythritol 2-phosphate.

Belongs to the IspF family. As to quaternary structure, homotrimer. The cofactor is a divalent metal cation.

It carries out the reaction 4-CDP-2-C-methyl-D-erythritol 2-phosphate = 2-C-methyl-D-erythritol 2,4-cyclic diphosphate + CMP. It functions in the pathway isoprenoid biosynthesis; isopentenyl diphosphate biosynthesis via DXP pathway; isopentenyl diphosphate from 1-deoxy-D-xylulose 5-phosphate: step 4/6. Functionally, involved in the biosynthesis of isopentenyl diphosphate (IPP) and dimethylallyl diphosphate (DMAPP), two major building blocks of isoprenoid compounds. Catalyzes the conversion of 4-diphosphocytidyl-2-C-methyl-D-erythritol 2-phosphate (CDP-ME2P) to 2-C-methyl-D-erythritol 2,4-cyclodiphosphate (ME-CPP) with a corresponding release of cytidine 5-monophosphate (CMP). In Escherichia coli O127:H6 (strain E2348/69 / EPEC), this protein is 2-C-methyl-D-erythritol 2,4-cyclodiphosphate synthase.